Reading from the N-terminus, the 257-residue chain is Undecaprenyl-diphosphatase (257 aa).

The next 7 membrane-spanning stretches (helical) occupy residues 42–62 (YVLF…YMFL), 76–96 (IFHI…LKPI), 103–123 (PQYL…GVYF), 136–156 (CLTI…RSGA), 172–192 (IQFS…LEIW), 209–229 (QFLT…WAVI), and 237–257 (WVYF…YFQM).

Belongs to the UppP family.

Its subcellular location is the cell inner membrane. The catalysed reaction is di-trans,octa-cis-undecaprenyl diphosphate + H2O = di-trans,octa-cis-undecaprenyl phosphate + phosphate + H(+). Functionally, catalyzes the dephosphorylation of undecaprenyl diphosphate (UPP). Confers resistance to bacitracin. The chain is Undecaprenyl-diphosphatase from Protochlamydia amoebophila (strain UWE25).